The sequence spans 630 residues: Chaperone protein DnaK (630 aa).

Phosphothreonine; by autocatalysis is present on threonine 197. The span at 604 to 618 (KNNESVKNNESVKNN) shows a compositional bias: polar residues. A disordered region spans residues 604–630 (KNNESVKNNESVKNNESVKDVDFEEIK). Over residues 619–630 (ESVKDVDFEEIK) the composition is skewed to basic and acidic residues.

Belongs to the heat shock protein 70 family.

Its function is as follows. Acts as a chaperone. The protein is Chaperone protein DnaK of Karelsulcia muelleri (strain GWSS) (Sulcia muelleri).